We begin with the raw amino-acid sequence, 137 residues long: Putative pre-16S rRNA nuclease (137 aa).

This sequence belongs to the YqgF nuclease family.

Its subcellular location is the cytoplasm. Functionally, could be a nuclease involved in processing of the 5'-end of pre-16S rRNA. This is Putative pre-16S rRNA nuclease from Bacillus cereus (strain G9842).